Consider the following 313-residue polypeptide: D-alanine--D-alanine ligase (313 aa).

An ATP-grasp domain is found at 114–309 (KWLWKGVGLP…FSKLVLKLIS (196 aa)). 142 to 195 (DLTFPVIVKPSHEGSSIGMRKVDTLDALQEAVDFAQQYDSEILIEQWITGREFT) serves as a coordination point for ATP. Asp263, Glu276, and Asn278 together coordinate Mg(2+).

This sequence belongs to the D-alanine--D-alanine ligase family. Mg(2+) serves as cofactor. The cofactor is Mn(2+).

The protein localises to the cytoplasm. It carries out the reaction 2 D-alanine + ATP = D-alanyl-D-alanine + ADP + phosphate + H(+). The protein operates within cell wall biogenesis; peptidoglycan biosynthesis. Its function is as follows. Cell wall formation. The chain is D-alanine--D-alanine ligase from Hydrogenovibrio crunogenus (strain DSM 25203 / XCL-2) (Thiomicrospira crunogena).